A 475-amino-acid polypeptide reads, in one-letter code: MSPQTETKASVGFKAGVKDYKLTYYTPDYETKDTDILAAFRVTPQPGVPPEEAGAAVAAESSTGTWTTVWTDGLTSLDRYKGRCYHIEPVAGEQTQFIAYVAYPLDLFEEGSVTNLFTSIVGNVFGLKALRALRLEGLRIPPAYSKTFQGPPHGIQVERDKLNKYGRPLLGCTIKPKLGLSAKNYGRAVYECLRGGLDFTKDDENVNSQPFMRWRDRFVFCAEAIYKAQAETGEIKGHYLNATAGTCEEMMKRAVFARELGVPIVMHDYLTGGFTANTSLAHYCRDNGLLLHIHRAMHAVIDRQKNHGMHFRVLAKALRMSGGDHIHAGTVVGKLEGERDITLGFVDLLRDDFIEKDRSRGIYFTQDWVSLPGVLPVASGGIHVWHMPALTEIFGDDSVLQFGGGTLGHPWGNAPGAVANRVALEACVQARNEGRDLAREGNEIIREASKWSPELAAACEVWKAIKFEFAAVDTL.

Positions 1–2 (MS) are excised as a propeptide. Pro3 carries the N-acetylproline modification. Lys14 is modified (N6,N6,N6-trimethyllysine). Residues Asn123 and Thr173 each coordinate substrate. The Proton acceptor role is filled by Lys175. Lys177 serves as a coordination point for substrate. Residues Lys201, Asp203, and Glu204 each contribute to the Mg(2+) site. Lys201 is subject to N6-carboxylysine. Catalysis depends on His294, which acts as the Proton acceptor. Substrate is bound by residues Arg295, His327, and Ser379.

This sequence belongs to the RuBisCO large chain family. Type I subfamily. Heterohexadecamer of 8 large chains and 8 small chains; disulfide-linked. The disulfide link is formed within the large subunit homodimers. Mg(2+) serves as cofactor. Post-translationally, the disulfide bond which can form in the large chain dimeric partners within the hexadecamer appears to be associated with oxidative stress and protein turnover.

It localises to the plastid. It is found in the chloroplast. The catalysed reaction is 2 (2R)-3-phosphoglycerate + 2 H(+) = D-ribulose 1,5-bisphosphate + CO2 + H2O. It catalyses the reaction D-ribulose 1,5-bisphosphate + O2 = 2-phosphoglycolate + (2R)-3-phosphoglycerate + 2 H(+). Functionally, ruBisCO catalyzes two reactions: the carboxylation of D-ribulose 1,5-bisphosphate, the primary event in carbon dioxide fixation, as well as the oxidative fragmentation of the pentose substrate in the photorespiration process. Both reactions occur simultaneously and in competition at the same active site. This Viscum album (European mistletoe) protein is Ribulose bisphosphate carboxylase large chain.